Consider the following 448-residue polypeptide: Antizyme inhibitor 1 (448 aa).

It belongs to the Orn/Lys/Arg decarboxylase class-II family. ODC antizyme inhibitor subfamily. Monomer. Interacts with OAZ1 and OAZ3; this interaction disrupts the interaction between the antizyme and ODC1. In terms of processing, ubiquitinated, leading to its proteasomal degradation; a process that is reduced in presence of antizyme OAZ1. As to expression, expressed during testis development.

The protein resides in the nucleus. Functionally, antizyme inhibitor (AZI) protein that positively regulates ornithine decarboxylase (ODC) activity and polyamine uptake. AZI is an enzymatically inactive ODC homolog that counteracts the negative effect of ODC antizymes (AZs) OAZ1, OAZ2 and OAZ3 on ODC activity by competing with ODC for antizyme-binding. Inhibits antizyme-dependent ODC degradation and releases ODC monomers from their inactive complex with antizymes, leading to formation of the catalytically active ODC homodimer and restoring polyamine production. The sequence is that of Antizyme inhibitor 1 (Azin1) from Mus musculus (Mouse).